A 47-amino-acid polypeptide reads, in one-letter code: Photosystem II reaction center protein K (47 aa).

The propeptide occupies 1–10 (MALINFDLLA). A helical transmembrane segment spans residues 26-46 (LPLIPLFFFLLVFVWQAAVGF).

This sequence belongs to the PsbK family. In terms of assembly, PSII is composed of 1 copy each of membrane proteins PsbA, PsbB, PsbC, PsbD, PsbE, PsbF, PsbH, PsbI, PsbJ, PsbK, PsbL, PsbM, PsbT, PsbX, PsbY, Psb30/Ycf12, peripheral proteins PsbO, CyanoQ (PsbQ), PsbU, PsbV and a large number of cofactors. It forms dimeric complexes.

The protein resides in the cellular thylakoid membrane. In terms of biological role, one of the components of the core complex of photosystem II (PSII). PSII is a light-driven water:plastoquinone oxidoreductase that uses light energy to abstract electrons from H(2)O, generating O(2) and a proton gradient subsequently used for ATP formation. It consists of a core antenna complex that captures photons, and an electron transfer chain that converts photonic excitation into a charge separation. The polypeptide is Photosystem II reaction center protein K (Prochlorococcus marinus (strain NATL1A)).